Here is a 184-residue protein sequence, read N- to C-terminus: ESX-1 secretion-associated protein EspD (184 aa).

The segment at I33–T56 is disordered.

It localises to the secreted. Its function is as follows. Required for ESX-1 function. Required for the maintenance of adequate cellular levels of both EspA and EspC. Facilitates EsxA secretion. The chain is ESX-1 secretion-associated protein EspD from Mycobacterium tuberculosis (strain CDC 1551 / Oshkosh).